The sequence spans 901 residues: HTH-type transcriptional regulator MalT (901 aa).

39-46 (SPAGYGKT) lines the ATP pocket. Residues 829–894 (ELIHTSPLTQ…AAVQHAQKLL (66 aa)) enclose the HTH luxR-type domain. Positions 853 to 872 (NEQIAGELEVAATTIKTHIR) form a DNA-binding region, H-T-H motif.

The protein belongs to the MalT family. As to quaternary structure, monomer in solution. Oligomerizes to an active state in the presence of the positive effectors ATP and maltotriose.

Activated by ATP and maltotriose, which are both required for DNA binding. Positively regulates the transcription of the maltose regulon whose gene products are responsible for uptake and catabolism of malto-oligosaccharides. Specifically binds to the promoter region of its target genes, recognizing a short DNA motif called the MalT box. The sequence is that of HTH-type transcriptional regulator MalT from Shigella sonnei (strain Ss046).